A 285-amino-acid polypeptide reads, in one-letter code: Phosphatase YwpJ (285 aa).

Aspartate 7 acts as the Nucleophile in catalysis. Aspartate 7 contributes to the Mg(2+) binding site. Leucine 8 lines the phosphate pocket. Aspartate 9 serves as a coordination point for Mg(2+). Phosphate is bound by residues 41–42 (TG) and lysine 214. Residues aspartate 237 and serine 238 each contribute to the Mg(2+) site. Phosphate-binding positions include asparagine 240 and 282–283 (KH).

The protein belongs to the HAD-like hydrolase superfamily. Cof family. Requires Mg(2+) as cofactor.

Its function is as follows. Catalyzes the dephosphorylation of phosphorylated 5-6 carbon sugars and monophosphate nucleotides (NMP) in vitro. To a lesser extent, dephosphorylates flavin mononucleotide (FMN) in vitro. In Bacillus subtilis (strain 168), this protein is Phosphatase YwpJ (ywpJ).